The primary structure comprises 177 residues: Interleukin-1 receptor antagonist protein (177 aa).

A signal peptide spans Met1–Cys25. Cysteines 91 and 141 form a disulfide. N-linked (GlcNAc...) asparagine glycosylation is found at Asn109 and Asn114.

Belongs to the IL-1 family.

The protein localises to the secreted. Its function is as follows. Anti-inflammatory antagonist of interleukin-1 family of proinflammatory cytokines such as interleukin-1beta/IL1B and interleukin-1alpha/IL1A. Protects from immune dysregulation and uncontrolled systemic inflammation triggered by IL1 for a range of innate stimulatory agents such as pathogens. The polypeptide is Interleukin-1 receptor antagonist protein (IL1RN) (Tursiops truncatus (Atlantic bottle-nosed dolphin)).